The chain runs to 82 residues: Exodeoxyribonuclease 7 small subunit (82 aa).

This sequence belongs to the XseB family. In terms of assembly, heterooligomer composed of large and small subunits.

The protein resides in the cytoplasm. It catalyses the reaction Exonucleolytic cleavage in either 5'- to 3'- or 3'- to 5'-direction to yield nucleoside 5'-phosphates.. Functionally, bidirectionally degrades single-stranded DNA into large acid-insoluble oligonucleotides, which are then degraded further into small acid-soluble oligonucleotides. This is Exodeoxyribonuclease 7 small subunit from Sodalis glossinidius (strain morsitans).